The following is a 277-amino-acid chain: Carbonyl reductase [NADPH] 1 (277 aa).

NADP(+)-binding positions include V10–L34, D63–I64, and N90. S30 bears the Phosphoserine mark. Glutathione-binding positions include F95 to M97 and Q106. S140 is a binding site for substrate. Glutathione is bound at residue A193–Y194. Residue Y194 is the Proton acceptor of the active site. NADP(+) is bound by residues Y194–K198 and V231–T233.

This sequence belongs to the short-chain dehydrogenases/reductases (SDR) family. In terms of assembly, monomer. Present in liver and kidney.

The protein resides in the cytoplasm. The catalysed reaction is a secondary alcohol + NADP(+) = a ketone + NADPH + H(+). The enzyme catalyses prostaglandin F2alpha + NADP(+) = prostaglandin E2 + NADPH + H(+). It carries out the reaction prostaglandin E1 + NADP(+) = 15-oxoprostaglandin E1 + NADPH + H(+). It catalyses the reaction menadione + NADPH + H(+) = menadiol + NADP(+). The catalysed reaction is prostaglandin D2 + NADP(+) = 15-oxoprostaglandin D2 + NADPH + H(+). The enzyme catalyses prostaglandin E2 + NADP(+) = 15-oxoprostaglandin E2 + NADPH + H(+). It carries out the reaction prostaglandin F2alpha + NADP(+) = 15-oxoprostaglandin F2alpha + NADPH + H(+). It catalyses the reaction daunorubicin + NADPH + H(+) = 13-dihydrodaunorubicin + NADP(+). The catalysed reaction is S-nitrosoglutathione + NADPH + H(+) = S-(hydroxysulfenamide)glutathione + NADP(+). The enzyme catalyses a primary alcohol + NADP(+) = an aldehyde + NADPH + H(+). It carries out the reaction cortisol + NADPH + H(+) = 20beta-dihydrocortisol + NADP(+). It catalyses the reaction corticosterone + NADPH + H(+) = 20beta-dihydrocorticosterone + NADP(+). Functionally, NADPH-dependent reductase with broad substrate specificity. Catalyzes the reduction of a wide variety of carbonyl compounds including quinones, prostaglandins, menadione, plus various xenobiotics. Catalyzes the reduction of the antitumor anthracyclines doxorubicin and daunorubicin to the cardiotoxic compounds doxorubicinol and daunorubicinol. Can convert prostaglandin E to prostaglandin F2-alpha. Can bind glutathione, which explains its higher affinity for glutathione-conjugated substrates. Catalyzes the reduction of S-nitrosoglutathione. In addition, participates in the glucocorticoid metabolism by catalyzing the NADPH-dependent cortisol/corticosterone into 20beta-dihydrocortisol (20b-DHF) or 20beta-corticosterone (20b-DHB), which are weak agonists of NR3C1 and NR3C2 in adipose tissue. In Oryctolagus cuniculus (Rabbit), this protein is Carbonyl reductase [NADPH] 1.